The following is a 466-amino-acid chain: MVFLSGNASDSSNCTQPPAPVNISKAILLGVILGGLILFGVLGNILVILSVACHRHLHSVTHYYIVNLAVADLLLTSTVLPFSAIFEVLGYWAFGRVFCNIWAAVDVLCCTASIMGLCIISIDRYIGVSYPLRYPTIVTQRRGLMALLCVWALSLVISIGPLFGWRQPAPEDETICQINEEPGYVLFSALGSFYLPLAIILVMYCRVYVVAKRESRGLKSGLKTDKSDSEQVTLRIHRKNAPAGGSGMASAKTKTHFSVRLLKFSREKKAAKTLGIVVGCFVLCWLPFFLVMPIGSFFPDFKPSETVFKIVFWLGYLNSCINPIIYPCSSQEFKKAFQNVLRIQCLCRKQSSKHALGYTLHPPSQAVEGQHKDMVRIPVGSRETFYRISKTDGVCEWKFFSSMPRGSARITVSKDQSSCTTARVRSKSFLQVCCCVGPSTPSLDKNHQVPTIKVHTISLSENGEEV.

At 1-27 (MVFLSGNASDSSNCTQPPAPVNISKAI) the chain is on the extracellular side. Asn7, Asn13, and Asn22 each carry an N-linked (GlcNAc...) asparagine glycan. Residues 28–51 (LLGVILGGLILFGVLGNILVILSV) traverse the membrane as a helical segment. Residues 52–64 (ACHRHLHSVTHYY) are Cytoplasmic-facing. Residues 65–88 (IVNLAVADLLLTSTVLPFSAIFEV) traverse the membrane as a helical segment. The Extracellular portion of the chain corresponds to 89–99 (LGYWAFGRVFC). A disulfide bond links Cys99 and Cys176. The chain crosses the membrane as a helical span at residues 100–122 (NIWAAVDVLCCTASIMGLCIISI). Topologically, residues 123-143 (DRYIGVSYPLRYPTIVTQRRG) are cytoplasmic. The chain crosses the membrane as a helical span at residues 144–167 (LMALLCVWALSLVISIGPLFGWRQ). Topologically, residues 168–181 (PAPEDETICQINEE) are extracellular. The chain crosses the membrane as a helical span at residues 182–205 (PGYVLFSALGSFYLPLAIILVMYC). Over 206-273 (RVYVVAKRES…FSREKKAAKT (68 aa)) the chain is Cytoplasmic. Ser215 carries the phosphoserine; by PKA modification. A helical membrane pass occupies residues 274–297 (LGIVVGCFVLCWLPFFLVMPIGSF). Topologically, residues 298–305 (FPDFKPSE) are extracellular. Residues 306-329 (TVFKIVFWLGYLNSCINPIIYPCS) form a helical membrane-spanning segment. Residues 330–466 (SQEFKKAFQN…ISLSENGEEV (137 aa)) lie on the Cytoplasmic side of the membrane. The short motif at 334 to 349 (KKAFQNVLRIQCLCRK) is the Nuclear localization signal element. A lipid anchor (S-palmitoyl cysteine) is attached at Cys345.

This sequence belongs to the G-protein coupled receptor 1 family. Adrenergic receptor subfamily. ADRA1A sub-subfamily. In terms of assembly, homo- and heterooligomer. Heterooligomerizes with ADRA1B homooligomers in cardiac myocytes. Interacts with CAVIN4. C-terminal Ser or Thr residues may be phosphorylated. As to expression, expressed in heart, brain, liver and prostate, but not in kidney, lung, adrenal, aorta and pituitary. Within the prostate, expressed in the apex, base, periurethral and lateral lobe. Isoform 4 is the most abundant isoform expressed in the prostate with high levels also detected in liver and heart.

It is found in the nucleus membrane. The protein resides in the cell membrane. It localises to the cytoplasm. Its subcellular location is the membrane. The protein localises to the caveola. Its function is as follows. This alpha-adrenergic receptor mediates its action by association with G proteins that activate a phosphatidylinositol-calcium second messenger system. Its effect is mediated by G(q) and G(11) proteins. Nuclear ADRA1A-ADRA1B heterooligomers regulate phenylephrine(PE)-stimulated ERK signaling in cardiac myocytes. This Homo sapiens (Human) protein is Alpha-1A adrenergic receptor (ADRA1A).